Here is a 579-residue protein sequence, read N- to C-terminus: ATP-dependent RNA helicase SUV3, mitochondrial (579 aa).

The N-terminal 59 residues, 1–59 (MAVAAALLRRRALYSALASPSWLHDTSSCYICSISGTHSLVNHPNLRLQRGYHNSGKFD), are a transit peptide targeting the mitochondrion. Residues 72–213 (NAREKKRNVF…QRILEPTGDV (142 aa)) enclose the Helicase ATP-binding domain. 85 to 92 (GPTNSGKT) serves as a coordination point for ATP. Positions 214-388 (VTVQYYERLS…GLFPTFDVLS (175 aa)) constitute a Helicase C-terminal domain. Residue Asn309 is glycosylated (N-linked (GlcNAc...) asparagine).

Belongs to the helicase family. Homodimer; in free form. Component of the mitochondrial degradosome (mtEXO) complex which is a heteropentamer containing 2 copies of SUPV3L1 and 3 copies of PNPT1. Mg(2+) serves as cofactor. Requires Mn(2+) as cofactor.

Its subcellular location is the nucleus. The protein localises to the mitochondrion matrix. It localises to the mitochondrion nucleoid. It carries out the reaction ATP + H2O = ADP + phosphate + H(+). Its function is as follows. Major helicase player in mitochondrial RNA metabolism. Component of the mitochondrial degradosome (mtEXO) complex, that degrades 3' overhang double-stranded RNA with a 3'-to-5' directionality in an ATP-dependent manner. ATPase and ATP-dependent multisubstrate helicase, able to unwind double-stranded (ds) DNA and RNA, and RNA/DNA heteroduplexes in the 5'-to-3' direction. Plays a role in the RNA surveillance system in mitochondria; regulates the stability of mature mRNAs, the removal of aberrantly formed mRNAs and the rapid degradation of non coding processing intermediates. Confers salinity and drought stress tolerances by maintaining both photosynthesis and antioxidant machinery, probably via an increase in plant hormones levels such as gibberellic acid (GA(3)), the cytokinin zeatin (Z) and indole-3-acetic acid (IAA). This Oryza sativa subsp. japonica (Rice) protein is ATP-dependent RNA helicase SUV3, mitochondrial.